Consider the following 459-residue polypeptide: GTPase Der (459 aa).

EngA-type G domains are found at residues F3–V167 and I188–N363. GTP is bound by residues G9 to S16, D56 to L60, N119 to E122, G194 to S201, D241 to L245, and N306 to D309. The KH-like domain occupies R364 to A448.

This sequence belongs to the TRAFAC class TrmE-Era-EngA-EngB-Septin-like GTPase superfamily. EngA (Der) GTPase family. In terms of assembly, associates with the 50S ribosomal subunit.

Functionally, GTPase that plays an essential role in the late steps of ribosome biogenesis. This chain is GTPase Der, found in Rhodopseudomonas palustris (strain TIE-1).